A 364-amino-acid polypeptide reads, in one-letter code: Dihydroorotate dehydrogenase (quinone) (364 aa).

FMN-binding positions include 61-65 and threonine 85; that span reads AGYDK. Position 65 (lysine 65) interacts with substrate. A substrate-binding site is contributed by 110-114; that stretch reads NRLGF. Residues asparagine 139 and asparagine 170 each contribute to the FMN site. Asparagine 170 serves as a coordination point for substrate. The active-site Nucleophile is serine 173. Substrate is bound at residue asparagine 175. FMN contacts are provided by lysine 215 and serine 243. Residue 244 to 245 participates in substrate binding; it reads NT. Residues glycine 266, glycine 295, and 316–317 contribute to the FMN site; that span reads YT.

This sequence belongs to the dihydroorotate dehydrogenase family. Type 2 subfamily. In terms of assembly, monomer. FMN serves as cofactor.

The protein localises to the cell membrane. The enzyme catalyses (S)-dihydroorotate + a quinone = orotate + a quinol. It functions in the pathway pyrimidine metabolism; UMP biosynthesis via de novo pathway; orotate from (S)-dihydroorotate (quinone route): step 1/1. Its function is as follows. Catalyzes the conversion of dihydroorotate to orotate with quinone as electron acceptor. This is Dihydroorotate dehydrogenase (quinone) from Brucella abortus (strain S19).